Consider the following 405-residue polypeptide: Serpin I2 (405 aa).

The N-terminal stretch at 1–18 (MNKTILWSFLLFFSGSQT) is a signal peptide. The N-linked (GlcNAc...) asparagine glycan is linked to Asn306.

The protein belongs to the serpin family. In terms of tissue distribution, expressed in pancreas.

The protein localises to the secreted. The sequence is that of Serpin I2 (Serpini2) from Mus musculus (Mouse).